A 301-amino-acid chain; its full sequence is MSEDEEKVKLRRLEPAIQKFTKIVIPTDLERLRKHQINIEKYQRCRIWDKLHEEHINAGRTVQQLRSNIREMEKLCLKVHKDDLVLLKRMIDPVKEAAATATAEFLQLHLESVEELKKQVNDEELLQPSLTRSTTVDGVLHTGEAEAASQSLTQIYALPEIPQDQNAAESWETLEADLIELSHLVTDMSLLVSSQQEKIDSIADHVNSAAVNVEEGTKNLQKAAKYKLAALPVAGALIGGVVGGPIGLLAGFKVAGIAAALGGGVLGFTGGKLIQRRKQKMMEKLTSSCPDLPSQSDKKRS.

N-acetylserine is present on serine 2. Over 2-227 (SEDEEKVKLR…KNLQKAAKYK (226 aa)) the chain is Cytoplasmic. Lysine 41 is subject to N6-acetyllysine. Positions 49–128 (DKLHEEHINA…QVNDEELLQP (80 aa)) form a coiled coil. Phosphotyrosine; by ABL1 is present on tyrosine 156. One can recognise a t-SNARE coiled-coil homology domain in the interval 161–223 (IPQDQNAAES…EEGTKNLQKA (63 aa)). The chain crosses the membrane as a helical span at residues 228–248 (LAALPVAGALIGGVVGGPIGL). The necessary and sufficient for localization to autophagosome stretch occupies residues 228–274 (LAALPVAGALIGGVVGGPIGLLAGFKVAGIAAALGGGVLGFTGGKLI). Residues 249–253 (LAGFK) are Lumenal-facing. Residues 254-274 (VAGIAAALGGGVLGFTGGKLI) form a helical membrane-spanning segment. The Cytoplasmic segment spans residues 275 to 301 (QRRKQKMMEKLTSSCPDLPSQSDKKRS). Position 288 is a phosphoserine (serine 288). The short motif at 298-301 (KKRS) is the Endoplasmic reticulum retention signal element.

Belongs to the syntaxin family. As to quaternary structure, forms a SNARE complex composed of VAMP8, SNAP29 and STX17 involved in fusion of autophagosome with lysosome. May interact with VTI1B. Probably interacts with BET1, SCFD1 and SEC22B. Interacts with PTPN2 and ABL1; involved in STX17 phosphorylation. Interacts with COPB1. Interacts with TMED9 and TMED10; the interaction is direct. Interacts with VAMP7. Interacts with RUBCNL/PACER; promoting targeting of RUBCNL/PACER to autophagosome. Interacts with VAMP8, SNAP29, VPS39 and VPS41; these interactions are increased in the absence of TMEM39A. Interacts with IRGM; promoting STX17 recruitment to autophagosomes. Interacts with ATG8 proteins GABARAP and MAP1LC3B. Interacts with RNF115; this interaction enhances STX17 stability which in turn promotes autophagosome maturation. Interacts with RAB39A (GTP-bound); the interaction promotes autophagosome-lysosome membrane fusion driven by STX17-SNAP29-VAMP8. Interacts with RAB39B; the interaction may promote a different fonction in autophagy as compared with RAB39A. Post-translationally, dephosphorylation by PTPN2; regulates exit from the endoplasmic reticulum. Phosphorylated at Tyr-156 probably by ABL1.

It is found in the endoplasmic reticulum membrane. It localises to the smooth endoplasmic reticulum membrane. Its subcellular location is the endoplasmic reticulum-Golgi intermediate compartment membrane. The protein resides in the cytoplasmic vesicle. The protein localises to the autophagosome membrane. It is found in the COPII-coated vesicle membrane. It localises to the cytoplasm. Its subcellular location is the cytosol. The protein resides in the mitochondrion membrane. The protein localises to the autolysosome membrane. In terms of biological role, SNAREs, soluble N-ethylmaleimide-sensitive factor-attachment protein receptors, are essential proteins for fusion of cellular membranes. SNAREs localized on opposing membranes assemble to form a trans-SNARE complex, an extended, parallel four alpha-helical bundle that drives membrane fusion. STX17 is a SNARE of the autophagosome involved in autophagy through the direct control of autophagosome membrane fusion with the lysosome membrane. May also play a role in the early secretory pathway where it may maintain the architecture of the endoplasmic reticulum-Golgi intermediate compartment/ERGIC and Golgi and/or regulate transport between the endoplasmic reticulum, the ERGIC and the Golgi. This is Syntaxin-17 from Mus musculus (Mouse).